Here is a 384-residue protein sequence, read N- to C-terminus: Succinate--CoA ligase [ADP-forming] subunit beta (384 aa).

Residues 9–242 (KAILAQYKVP…LNEEDPLEVE (234 aa)) enclose the ATP-grasp domain. ATP contacts are provided by residues lysine 45, 52 to 54 (GRG), glutamate 98, leucine 101, and glutamate 106. Residues asparagine 197 and aspartate 211 each coordinate Mg(2+). Residues asparagine 262 and 319 to 321 (GIL) contribute to the substrate site.

The protein belongs to the succinate/malate CoA ligase beta subunit family. Heterotetramer of two alpha and two beta subunits. Mg(2+) serves as cofactor.

It carries out the reaction succinate + ATP + CoA = succinyl-CoA + ADP + phosphate. It catalyses the reaction GTP + succinate + CoA = succinyl-CoA + GDP + phosphate. It functions in the pathway carbohydrate metabolism; tricarboxylic acid cycle; succinate from succinyl-CoA (ligase route): step 1/1. Functionally, succinyl-CoA synthetase functions in the citric acid cycle (TCA), coupling the hydrolysis of succinyl-CoA to the synthesis of either ATP or GTP and thus represents the only step of substrate-level phosphorylation in the TCA. The beta subunit provides nucleotide specificity of the enzyme and binds the substrate succinate, while the binding sites for coenzyme A and phosphate are found in the alpha subunit. This chain is Succinate--CoA ligase [ADP-forming] subunit beta, found in Solibacter usitatus (strain Ellin6076).